Here is a 403-residue protein sequence, read N- to C-terminus: Anti-sigma-I factor RsgI8 (403 aa).

The Cytoplasmic segment spans residues 1–59 (MTKQKGTILKLKNNLAIIMTSDCKIVSIKRQPGMYEGLEISFNKNEIINKKNKLAFYSR). One can recognise a RsgI N-terminal anti-sigma domain in the interval 4 to 51 (QKGTILKLKNNLAIIMTSDCKIVSIKRQPGMYEGLEISFNKNEIINKK). A helical membrane pass occupies residues 60 to 80 (IAAGIAAIFIIMVISFNLFNN). Topologically, residues 81-403 (NDVYAYVAID…KAKNSIEKMP (323 aa)) are extracellular. Composition is skewed to basic and acidic residues over residues 254–314 (VHNV…EPAK), 324–335 (LPKDKTIPEEKT), and 349–403 (VEPK…EKMP). The interval 254–403 (VHNVKKEEPK…KAKNSIEKMP (150 aa)) is disordered.

Interacts (via RsgI N-terminal anti-sigma domain) with SigI8.

The protein resides in the cell membrane. Its function is as follows. Anti-sigma factor for SigI8. Negatively regulates SigI8 activity through direct interaction. The sequence is that of Anti-sigma-I factor RsgI8 from Acetivibrio thermocellus (strain ATCC 27405 / DSM 1237 / JCM 9322 / NBRC 103400 / NCIMB 10682 / NRRL B-4536 / VPI 7372) (Clostridium thermocellum).